Reading from the N-terminus, the 993-residue chain is Replication protein 1a (993 aa).

Positions 50 to 409 are methyltransferase; the sequence is RNVLSVKDSE…TIVINGMSMQ (360 aa). One can recognise an Alphavirus-like MT domain in the interval 72-290; it reads HLTQQEFAPH…HDWENIKSFL (219 aa). The interval 537–565 is disordered; it reads LAQPVDEVSDSPEVPSSTPDDTADVCGKE. The (+)RNA virus helicase ATP-binding domain maps to 687-838; the sequence is CVICNSESLS…KIIPDETSDA (152 aa). An ATP-dependent helicase region spans residues 712–975; sequence VDGVAGCGKT…LTRHKVTFRY (264 aa). ATP is bound at residue 714 to 721; it reads GVAGCGKT. Residues 839-993 enclose the (+)RNA virus helicase C-terminal domain; it reads DTTFRSPQDV…DLIAECIARA (155 aa).

It belongs to the bromoviridae replication protein 1a family. In terms of assembly, interacts with RNA-directed RNA polymerase 2a.

It localises to the host endoplasmic reticulum membrane. Involved in the virus replication. Contains a helicase domain and a methyltransferase domain. The methyltransferase domain is probably involved in viral RNA capping. Involved in the formation of ER membrane spherular invaginations in which RNA replication complexes form. This Cucumber mosaic virus (strain O) (CMV) protein is Replication protein 1a.